The chain runs to 78 residues: Mu-conotoxin BuIIIB (78 aa).

Residues 1 to 22 form the signal peptide; sequence MMSKLGVLLTICLLLFPLFALP. Residues 23-51 constitute a propeptide that is removed on maturation; the sequence is QDGDQPADRPAERMQDDISSEQNPLLEKR. Positions 26–46 are disordered; it reads DQPADRPAERMQDDISSEQNP. Over residues 28–38 the composition is skewed to basic and acidic residues; it reads PADRPAERMQD. 3 cysteine pairs are disulfide-bonded: Cys-56-Cys-68, Cys-57-Cys-74, and Cys-64-Cys-75. Position 75 is a cysteine amide (Cys-75).

It belongs to the conotoxin M superfamily. Expressed by the venom duct.

The protein localises to the secreted. Its function is as follows. Mu-conotoxins block voltage-gated sodium channels (Nav). This synthetic toxin potently blocks rNav1.4/SCN4A (Kd=0.34-3.6 nM), rNav1.2/SCN2A (Kd=13 nM), rNav1.3/SCN3A (Kd=200 nM), rNav1.1/SCN1A (Kd=360 nM), mNav1.6/SCN8A (IC(50)=1.8 uM), rNav1.5/SCN5A (IC(50)=9 uM), rNav1.6/SCN8A (IC(50)&gt;30 uM). It is noteworthy that the toxin is 50-fold more potent on mouse Nav1.6 than on rat Nav1.6. The block of SCN4A is very slowly reversible. The sequence is that of Mu-conotoxin BuIIIB from Conus bullatus (Bubble cone).